The primary structure comprises 140 residues: Small ribosomal subunit protein uS19 (140 aa).

Belongs to the universal ribosomal protein uS19 family.

Its function is as follows. Protein S19 forms a complex with S13 that binds strongly to the 16S ribosomal RNA. The polypeptide is Small ribosomal subunit protein uS19 (Methanocella arvoryzae (strain DSM 22066 / NBRC 105507 / MRE50)).